The primary structure comprises 691 residues: Elongation factor G (691 aa).

The region spanning 8 to 282 is the tr-type G domain; it reads HMVRNIGIAA…AVVDYLPAPD (275 aa). GTP is bound by residues 17-24, 81-85, and 135-138; these read AHIDAGKT, DTPGH, and NKMD.

This sequence belongs to the TRAFAC class translation factor GTPase superfamily. Classic translation factor GTPase family. EF-G/EF-2 subfamily.

It is found in the cytoplasm. Its function is as follows. Catalyzes the GTP-dependent ribosomal translocation step during translation elongation. During this step, the ribosome changes from the pre-translocational (PRE) to the post-translocational (POST) state as the newly formed A-site-bound peptidyl-tRNA and P-site-bound deacylated tRNA move to the P and E sites, respectively. Catalyzes the coordinated movement of the two tRNA molecules, the mRNA and conformational changes in the ribosome. This is Elongation factor G from Campylobacter hominis (strain ATCC BAA-381 / DSM 21671 / CCUG 45161 / LMG 19568 / NCTC 13146 / CH001A).